A 292-amino-acid chain; its full sequence is GTP cyclohydrolase FolE2 (292 aa).

It belongs to the GTP cyclohydrolase IV family.

It carries out the reaction GTP + H2O = 7,8-dihydroneopterin 3'-triphosphate + formate + H(+). It functions in the pathway cofactor biosynthesis; 7,8-dihydroneopterin triphosphate biosynthesis; 7,8-dihydroneopterin triphosphate from GTP: step 1/1. Its function is as follows. Converts GTP to 7,8-dihydroneopterin triphosphate. This is GTP cyclohydrolase FolE2 from Staphylococcus epidermidis (strain ATCC 35984 / DSM 28319 / BCRC 17069 / CCUG 31568 / BM 3577 / RP62A).